A 221-amino-acid chain; its full sequence is Orotate phosphoribosyltransferase (221 aa).

Residue Lys-26 participates in 5-phospho-alpha-D-ribose 1-diphosphate binding. Residue 34 to 35 (FF) participates in orotate binding. 5-phospho-alpha-D-ribose 1-diphosphate contacts are provided by residues 72–73 (YK), Arg-98, Lys-99, Lys-102, His-104, and 123–131 (DDVISAGTS). Ser-127 and Arg-155 together coordinate orotate.

This sequence belongs to the purine/pyrimidine phosphoribosyltransferase family. PyrE subfamily. As to quaternary structure, homodimer. It depends on Mg(2+) as a cofactor.

It catalyses the reaction orotidine 5'-phosphate + diphosphate = orotate + 5-phospho-alpha-D-ribose 1-diphosphate. It functions in the pathway pyrimidine metabolism; UMP biosynthesis via de novo pathway; UMP from orotate: step 1/2. Catalyzes the transfer of a ribosyl phosphate group from 5-phosphoribose 1-diphosphate to orotate, leading to the formation of orotidine monophosphate (OMP). In Janthinobacterium sp. (strain Marseille) (Minibacterium massiliensis), this protein is Orotate phosphoribosyltransferase.